Here is a 234-residue protein sequence, read N- to C-terminus: tRNA (guanine-N(1)-)-methyltransferase (234 aa).

Residues glycine 112 and 132-137 (IGDFIL) contribute to the S-adenosyl-L-methionine site.

Belongs to the RNA methyltransferase TrmD family. In terms of assembly, homodimer.

The protein localises to the cytoplasm. It catalyses the reaction guanosine(37) in tRNA + S-adenosyl-L-methionine = N(1)-methylguanosine(37) in tRNA + S-adenosyl-L-homocysteine + H(+). Functionally, specifically methylates guanosine-37 in various tRNAs. The protein is tRNA (guanine-N(1)-)-methyltransferase of Campylobacter jejuni subsp. doylei (strain ATCC BAA-1458 / RM4099 / 269.97).